We begin with the raw amino-acid sequence, 595 residues long: Elongation factor 4 (595 aa).

Residues 2 to 183 (KNIRNFCIIA…TIVEKVPAPK (182 aa)) form the tr-type G domain. Residues 14–19 (DHGKST) and 130–133 (NKID) contribute to the GTP site.

This sequence belongs to the TRAFAC class translation factor GTPase superfamily. Classic translation factor GTPase family. LepA subfamily.

It localises to the cell inner membrane. The enzyme catalyses GTP + H2O = GDP + phosphate + H(+). In terms of biological role, required for accurate and efficient protein synthesis under certain stress conditions. May act as a fidelity factor of the translation reaction, by catalyzing a one-codon backward translocation of tRNAs on improperly translocated ribosomes. Back-translocation proceeds from a post-translocation (POST) complex to a pre-translocation (PRE) complex, thus giving elongation factor G a second chance to translocate the tRNAs correctly. Binds to ribosomes in a GTP-dependent manner. In Parabacteroides distasonis (strain ATCC 8503 / DSM 20701 / CIP 104284 / JCM 5825 / NCTC 11152), this protein is Elongation factor 4.